The sequence spans 347 residues: tRNA N6-adenosine threonylcarbamoyltransferase (347 aa).

Fe cation contacts are provided by H117 and H121. Substrate is bound by residues 140 to 144 (LVSGG), D174, G187, D191, and N281. D309 provides a ligand contact to Fe cation.

It belongs to the KAE1 / TsaD family. It depends on Fe(2+) as a cofactor.

The protein localises to the cytoplasm. The enzyme catalyses L-threonylcarbamoyladenylate + adenosine(37) in tRNA = N(6)-L-threonylcarbamoyladenosine(37) in tRNA + AMP + H(+). In terms of biological role, required for the formation of a threonylcarbamoyl group on adenosine at position 37 (t(6)A37) in tRNAs that read codons beginning with adenine. Is involved in the transfer of the threonylcarbamoyl moiety of threonylcarbamoyl-AMP (TC-AMP) to the N6 group of A37, together with TsaE and TsaB. TsaD likely plays a direct catalytic role in this reaction. In Thermobifida fusca (strain YX), this protein is tRNA N6-adenosine threonylcarbamoyltransferase.